The primary structure comprises 325 residues: Acetyl-coenzyme A carboxylase carboxyl transferase subunit alpha (325 aa).

The CoA carboxyltransferase C-terminal domain maps to 38 to 292; sequence KLEKRLHALE…DQVLEKSLKQ (255 aa).

It belongs to the AccA family. As to quaternary structure, acetyl-CoA carboxylase is a heterohexamer composed of biotin carboxyl carrier protein (AccB), biotin carboxylase (AccC) and two subunits each of ACCase subunit alpha (AccA) and ACCase subunit beta (AccD).

It is found in the cytoplasm. It catalyses the reaction N(6)-carboxybiotinyl-L-lysyl-[protein] + acetyl-CoA = N(6)-biotinyl-L-lysyl-[protein] + malonyl-CoA. It participates in lipid metabolism; malonyl-CoA biosynthesis; malonyl-CoA from acetyl-CoA: step 1/1. Its function is as follows. Component of the acetyl coenzyme A carboxylase (ACC) complex. First, biotin carboxylase catalyzes the carboxylation of biotin on its carrier protein (BCCP) and then the CO(2) group is transferred by the carboxyltransferase to acetyl-CoA to form malonyl-CoA. This chain is Acetyl-coenzyme A carboxylase carboxyl transferase subunit alpha, found in Halalkalibacterium halodurans (strain ATCC BAA-125 / DSM 18197 / FERM 7344 / JCM 9153 / C-125) (Bacillus halodurans).